We begin with the raw amino-acid sequence, 522 residues long: Putative lipase ATG15 (522 aa).

At 1 to 5 (MYIPG) the chain is on the cytoplasmic side. A helical; Signal-anchor for type II membrane protein membrane pass occupies residues 6–26 (PLRLSSYLLPFLSSPSPPAQS). Over 27 to 522 (SPDTRTISFK…CYKWEFGEWN (496 aa)) the chain is Lumenal. 6 N-linked (GlcNAc...) asparagine glycosylation sites follow: asparagine 48, asparagine 133, asparagine 196, asparagine 220, asparagine 302, and asparagine 309. The active-site Charge relay system is serine 318. Asparagine 361 is a glycosylation site (N-linked (GlcNAc...) asparagine). The segment at 481-506 (RRGPKRQPGGEDPGWRKHGGVPKPVS) is disordered.

It belongs to the AB hydrolase superfamily. Lipase family. Binds to both phosphatidylinositol (PI) and phosphatidylinositol 3,5-bisphosphate (PIP2).

It is found in the endoplasmic reticulum membrane. The protein localises to the golgi apparatus membrane. The protein resides in the endosome. Its subcellular location is the multivesicular body membrane. It localises to the prevacuolar compartment membrane. The enzyme catalyses a triacylglycerol + H2O = a diacylglycerol + a fatty acid + H(+). Its function is as follows. Lipase which is essential for lysis of subvacuolar cytoplasm to vacuole targeted bodies and intravacuolar autophagic bodies. Involved in the lysis of intravacuolar multivesicular body (MVB) vesicles. The intravacuolar membrane disintegration by ATG15 is critical to life span extension. This chain is Putative lipase ATG15 (ATG15), found in Cryptococcus neoformans var. neoformans serotype D (strain JEC21 / ATCC MYA-565) (Filobasidiella neoformans).